Reading from the N-terminus, the 102-residue chain is Small ribosomal subunit protein uS10 (102 aa).

Belongs to the universal ribosomal protein uS10 family. In terms of assembly, part of the 30S ribosomal subunit.

Its function is as follows. Involved in the binding of tRNA to the ribosomes. In Fervidobacterium nodosum (strain ATCC 35602 / DSM 5306 / Rt17-B1), this protein is Small ribosomal subunit protein uS10.